Consider the following 193-residue polypeptide: Imidazoleglycerol-phosphate dehydratase (193 aa).

This sequence belongs to the imidazoleglycerol-phosphate dehydratase family.

It localises to the cytoplasm. It carries out the reaction D-erythro-1-(imidazol-4-yl)glycerol 3-phosphate = 3-(imidazol-4-yl)-2-oxopropyl phosphate + H2O. It functions in the pathway amino-acid biosynthesis; L-histidine biosynthesis; L-histidine from 5-phospho-alpha-D-ribose 1-diphosphate: step 6/9. In Staphylococcus carnosus (strain TM300), this protein is Imidazoleglycerol-phosphate dehydratase.